The following is a 619-amino-acid chain: Laccase (619 aa).

An N-terminal signal peptide occupies residues 1 to 21; that stretch reads MKFLGIAALVAGLLAPSLVLG. Positions 22 to 49 are excised as a propeptide; that stretch reads APAPGTEGVNLLTPVDKRQDSQAERYGG. C55 and C63 are disulfide-bonded. 2 Plastocyanin-like domains span residues 84–207 and 216–373; these read TRRY…IVIN and VDLG…LPTN. N139 carries N-linked (GlcNAc...) asparagine glycosylation. 4 residues coordinate Cu cation: H144, H146, H189, and H191. Disulfide bonds link C165/C586 and C349/C383. N-linked (GlcNAc...) asparagine glycans are attached at residues N282, N295, and N340. N-linked (GlcNAc...) asparagine glycans are attached at residues N422 and N444. The 136-residue stretch at 431-566 folds into the Plastocyanin-like 3 domain; that stretch reads NKPVLEYVLT…GGLSNQFLER (136 aa). Cu cation-binding residues include H477, H480, H482, H548, C549, H550, and H554. Residues 607 to 619 constitute a propeptide that is removed on maturation; sequence RSGVKAREVKMKW.

It belongs to the multicopper oxidase family. Cu cation serves as cofactor.

Its subcellular location is the secreted. The catalysed reaction is 4 hydroquinone + O2 = 4 benzosemiquinone + 2 H2O. Its function is as follows. Lignin degradation and detoxification of lignin-derived products. The chain is Laccase (lacc) from Neurospora crassa (strain ATCC 24698 / 74-OR23-1A / CBS 708.71 / DSM 1257 / FGSC 987).